The chain runs to 305 residues: Putative glutamine--fructose-6-phosphate aminotransferase [isomerizing] (305 aa).

Residue Cys-2 is the Nucleophile; for GATase activity of the active site. In terms of domain architecture, Glutamine amidotransferase type-2 spans 2–305 (CGIFGYCNFL…RLCITSAVCE (304 aa)).

It carries out the reaction D-fructose 6-phosphate + L-glutamine = D-glucosamine 6-phosphate + L-glutamate. It participates in nucleotide-sugar biosynthesis; UDP-N-acetyl-alpha-D-glucosamine biosynthesis; alpha-D-glucosamine 6-phosphate from D-fructose 6-phosphate: step 1/1. Functionally, involved in amino sugar synthesis (formation of chitin, supplies the amino sugars of asparagine-linked oligosaccharides of glycoproteins). The protein is Putative glutamine--fructose-6-phosphate aminotransferase [isomerizing] of Saccharomyces cerevisiae (strain Lalvin EC1118 / Prise de mousse) (Baker's yeast).